Reading from the N-terminus, the 231-residue chain is Cytochrome c oxidase subunit 2 (231 aa).

Residues 1-30 lie on the Mitochondrial intermembrane side of the membrane; the sequence is MNNFFQGYNLLFQHSLFASYMDWFHSFNCS. The chain crosses the membrane as a helical span at residues 31–52; it reads LLLGVLVFVTLLFGYLIFGTFY. The Mitochondrial matrix segment spans residues 53 to 69; that stretch reads FKSKKIEYQFGELLCSI. The chain crosses the membrane as a helical span at residues 70 to 89; the sequence is FPTIILLMQMVPSLSLLYYY. Residues 90 to 231 are Mitochondrial intermembrane-facing; sequence GLMNLDSNLT…FKSWCFGTME (142 aa). Cu cation is bound by residues histidine 164, cysteine 199, glutamate 201, cysteine 203, histidine 207, and methionine 210. Mg(2+) is bound at residue glutamate 201.

It belongs to the cytochrome c oxidase subunit 2 family. Component of the cytochrome c oxidase (complex IV, CIV), a multisubunit enzyme composed of a catalytic core of 3 subunits and several supernumerary subunits. The complex exists as a monomer or a dimer and forms supercomplexes (SCs) in the inner mitochondrial membrane with ubiquinol-cytochrome c oxidoreductase (cytochrome b-c1 complex, complex III, CIII). The cofactor is Cu cation.

The protein resides in the mitochondrion inner membrane. It catalyses the reaction 4 Fe(II)-[cytochrome c] + O2 + 8 H(+)(in) = 4 Fe(III)-[cytochrome c] + 2 H2O + 4 H(+)(out). In terms of biological role, component of the cytochrome c oxidase, the last enzyme in the mitochondrial electron transport chain which drives oxidative phosphorylation. The respiratory chain contains 3 multisubunit complexes succinate dehydrogenase (complex II, CII), ubiquinol-cytochrome c oxidoreductase (cytochrome b-c1 complex, complex III, CIII) and cytochrome c oxidase (complex IV, CIV), that cooperate to transfer electrons derived from NADH and succinate to molecular oxygen, creating an electrochemical gradient over the inner membrane that drives transmembrane transport and the ATP synthase. Cytochrome c oxidase is the component of the respiratory chain that catalyzes the reduction of oxygen to water. Electrons originating from reduced cytochrome c in the intermembrane space (IMS) are transferred via the dinuclear copper A center (CU(A)) of subunit 2 and heme A of subunit 1 to the active site in subunit 1, a binuclear center (BNC) formed by heme A3 and copper B (CU(B)). The BNC reduces molecular oxygen to 2 water molecules using 4 electrons from cytochrome c in the IMS and 4 protons from the mitochondrial matrix. This is Cytochrome c oxidase subunit 2 from Caenorhabditis elegans.